The primary structure comprises 261 residues: L-erythrulose-1-phosphate isomerase (261 aa).

Histidine 99 serves as the catalytic Electrophile. Residue glutamate 172 is the Proton acceptor of the active site.

The protein belongs to the triosephosphate isomerase family.

It catalyses the reaction L-erythrulose 1-phosphate = D-erythrulose 4-phosphate. The protein operates within carbohydrate metabolism. Involved in catabolism of D-apiose. Catalyzes the isomerization of L-erythrulose 1-phosphate to D-erythrulose 4-phosphate. The polypeptide is L-erythrulose-1-phosphate isomerase (Rhizobium rhizogenes (strain K84 / ATCC BAA-868) (Agrobacterium radiobacter)).